Reading from the N-terminus, the 155-residue chain is Reticulon-like protein B23 (155 aa).

The region spanning 1–155 (MGEMGKAIGL…LNRRNGEILD (155 aa)) is the Reticulon domain. The next 2 helical transmembrane spans lie at 30 to 50 (SLIS…GLLF) and 117 to 137 (IISG…SMLF).

The protein resides in the endoplasmic reticulum membrane. In Arabidopsis thaliana (Mouse-ear cress), this protein is Reticulon-like protein B23 (RTNLB23).